The primary structure comprises 266 residues: Cytochrome c oxidase assembly factor 7 homolog (266 aa).

Sel1-like repeat units follow at residues 32–64 and 66–104; these read PEAC…DDYG and AKSC…NLND. The span at 166–179 shows a compositional bias: low complexity; the sequence is AVTASSGSGTSSPP. Residues 166–187 form a disordered region; the sequence is AVTASSGSGTSSPPAGQPPLKD. Residues 212–247 form a Sel1-like 3 repeat; it reads MYACANLSQMYARGDGIEKNEKEAEKYKKLALEMQD.

It belongs to the hcp beta-lactamase family.

Its function is as follows. Required for locomotion. Probably involved in the regulation of formation/maintenance of motor neurons at presynaptic terminals at the neuromuscular junction. In Drosophila melanogaster (Fruit fly), this protein is Cytochrome c oxidase assembly factor 7 homolog.